The chain runs to 4017 residues: Hybrid PKS-NRPS synthetase cghG (4017 aa).

The Ketosynthase family 3 (KS3) domain occupies 6–438 (QEPIAVIGMA…GTNAHAIIES (433 aa)). Active-site for beta-ketoacyl synthase activity residues include cysteine 179, histidine 318, and histidine 358. The malonyl-CoA:ACP transacylase (MAT) domain stretch occupies residues 549–869 (VFTGQGAQWP…GRNKNDVVEL (321 aa)). Residues 936–1072 (NPILGRRCVE…ATLHVRFHEP (137 aa)) are N-terminal hotdog fold. The 308-residue stretch at 936 to 1243 (NPILGRRCVE…VKPFAAATAR (308 aa)) folds into the PKS/mFAS DH domain. Residues 937–1240 (PILGRRCVET…AVQVKPFAAA (304 aa)) are dehydratase (DH) domain. Histidine 969 (proton acceptor; for dehydratase activity) is an active-site residue. Residues 1087–1243 (LVKTDPGRLY…VKPFAAATAR (157 aa)) form a C-terminal hotdog fold region. Aspartate 1147 functions as the Proton donor; for dehydratase activity in the catalytic mechanism. Residues 1398–1585 (VANVWIARMV…GVDTHCPVEK (188 aa)) form a methyltransferase (MT) domain region. The segment at 2127 to 2300 (TYFLVGLSGE…XXXXXXXXXX (174 aa)) is ketoreductase (KR)domain. One can recognise a Carrier 1 domain in the interval 2423-2499 (AVVQDSLTEN…SLAEEAMAKI (77 aa)). An O-(pantetheine 4'-phosphoryl)serine modification is found at serine 2458. Disordered regions lie at residues 2547 to 2606 (VSEA…LQHR) and 2613 to 2632 (WAGS…AQRH). A compositionally biased stretch (polar residues) spans 2548 to 2578 (SEASGVSATTPSTRAETDASSSPALVSTPGT). The tract at residues 2626-3020 (RRAAQRHETL…GDAMETEKLQ (395 aa)) is condensation. Residues 3053 to 3453 (EVIAQNPTAV…SGFLAIEGRI (401 aa)) are adenylation. The disordered stretch occupies residues 3567 to 3586 (PKTTTASTTADGTQPAQPLT). Over residues 3569–3579 (TTTASTTADGT) the composition is skewed to low complexity. One can recognise a Carrier 2 domain in the interval 3583 to 3661 (QPLTPTESRL…SMAALLDQAG (79 aa)). Residues 3588–3658 (TESRLATLWA…ELGSMAALLD (71 aa)) are thiolation. At serine 3621 the chain carries O-(pantetheine 4'-phosphoryl)serine. The segment at 3696 to 3920 (VTGASGSLGK…DVGRLEDVAA (225 aa)) is reductase-like.

This sequence in the C-terminal section; belongs to the NRP synthetase family.

It catalyses the reaction (2S,4S)-4-hydroxy-4-methylglutamate + 8 malonyl-CoA + 3 S-adenosyl-L-methionine + ATP + 8 NADPH + 11 H(+) = (2S)-3-[(2S)-3,5-dioxo-4-[(2E,4R,6R,8E,10E,12E)-4,6,12-trimethyltetradeca-2,8,10,12-tetraenoyl]pyrrolidin-2-yl]-2-hydroxy-2-methylpropanoate + AMP + 3 S-adenosyl-L-homocysteine + 8 CO2 + diphosphate + 8 NADP(+) + 8 CoA + 6 H2O. It participates in secondary metabolite biosynthesis. Functionally, hybrid PKS-NRPS synthetase; part of the gene cluster that mediates the biosynthesis of the tetramic acid Sch210972, a potential anti-HIV fungal natural product that contains a decalin core. The PKS module of cghG together with the enoylreductase cghC catalyze the formation of the polyketide unit which is then conjugated to 4-hydroxyl-4-methyl glutamate (HMG) by the condensation domain of the cghG NRPS module. One unique structural feature of Sch210972 is the tetramic acid motif proposed to be derived from the non-proteinogenic amino acid HMG, by a Dieckmann-type condensation catalyzed by the reductase domain of cghG. The aldolase cghB catalyzes the aldol condensation of 2 molecules of pyruvic acid to yield the intermediate 4-hydroxyl-4-methyl-2-oxoglutarate (HMOG), which can then be stereoselectively transaminated by an unidentified enzyme to form HMG. The Diels-Alderase cghA then uses the Dieckmann product released by cghG as substrate and catalyzes the Diels-Alder cycloaddition to form the decalin ring of Sch210972. CghA also suppresses the nonenzymatic formation of the alternative stereoisomer. The sequence is that of Hybrid PKS-NRPS synthetase cghG from Chaetomium globosum (strain ATCC 6205 / CBS 148.51 / DSM 1962 / NBRC 6347 / NRRL 1970) (Soil fungus).